The chain runs to 440 residues: GTPase Der (440 aa).

EngA-type G domains follow at residues 4–168 (PIVA…NPED) and 177–352 (IKVA…NQNA). Residues 10–17 (GRPNVGKS), 57–61 (DTGGI), 120–123 (NKVD), 183–190 (GKPNVGKS), 230–234 (DTAGI), and 295–298 (NKWD) contribute to the GTP site. The 85-residue stretch at 353-437 (MRIPTGALNE…PIRFILREKT (85 aa)) folds into the KH-like domain.

Belongs to the TRAFAC class TrmE-Era-EngA-EngB-Septin-like GTPase superfamily. EngA (Der) GTPase family. As to quaternary structure, associates with the 50S ribosomal subunit.

GTPase that plays an essential role in the late steps of ribosome biogenesis. The sequence is that of GTPase Der from Alkaliphilus oremlandii (strain OhILAs) (Clostridium oremlandii (strain OhILAs)).